The primary structure comprises 275 residues: Dermonecrotic toxin SpaSicTox-betaIIA2 (275 aa).

Residue His-5 is part of the active site. Glu-25 and Asp-27 together coordinate Mg(2+). The active-site Nucleophile is the His-41. 2 disulfide bridges follow: Cys-45–Cys-51 and Cys-47–Cys-190. Asp-85 is a binding site for Mg(2+).

It belongs to the arthropod phospholipase D family. Class II subfamily. Requires Mg(2+) as cofactor. In terms of tissue distribution, expressed by the venom gland.

The protein resides in the secreted. The enzyme catalyses an N-(acyl)-sphingosylphosphocholine = an N-(acyl)-sphingosyl-1,3-cyclic phosphate + choline. It catalyses the reaction an N-(acyl)-sphingosylphosphoethanolamine = an N-(acyl)-sphingosyl-1,3-cyclic phosphate + ethanolamine. The catalysed reaction is a 1-acyl-sn-glycero-3-phosphocholine = a 1-acyl-sn-glycero-2,3-cyclic phosphate + choline. It carries out the reaction a 1-acyl-sn-glycero-3-phosphoethanolamine = a 1-acyl-sn-glycero-2,3-cyclic phosphate + ethanolamine. Functionally, dermonecrotic toxins cleave the phosphodiester linkage between the phosphate and headgroup of certain phospholipids (sphingolipid and lysolipid substrates), forming an alcohol (often choline) and a cyclic phosphate. This toxin acts on sphingomyelin (SM). It may also act on ceramide phosphoethanolamine (CPE), lysophosphatidylcholine (LPC) and lysophosphatidylethanolamine (LPE), but not on lysophosphatidylserine (LPS), and lysophosphatidylglycerol (LPG). It acts by transphosphatidylation, releasing exclusively cyclic phosphate products as second products. Induces dermonecrosis, hemolysis, increased vascular permeability, edema, inflammatory response, and platelet aggregation. This chain is Dermonecrotic toxin SpaSicTox-betaIIA2, found in Sicarius patagonicus (Six-eyed sand spider).